Consider the following 253-residue polypeptide: 2-C-methyl-D-erythritol 4-phosphate cytidylyltransferase (253 aa).

The tract at residues 1 to 28 (MSVSSRPGRRRFALIPSAGTGTRAGGDL) is disordered.

Belongs to the IspD/TarI cytidylyltransferase family. IspD subfamily.

The enzyme catalyses 2-C-methyl-D-erythritol 4-phosphate + CTP + H(+) = 4-CDP-2-C-methyl-D-erythritol + diphosphate. It functions in the pathway isoprenoid biosynthesis; isopentenyl diphosphate biosynthesis via DXP pathway; isopentenyl diphosphate from 1-deoxy-D-xylulose 5-phosphate: step 2/6. Functionally, catalyzes the formation of 4-diphosphocytidyl-2-C-methyl-D-erythritol from CTP and 2-C-methyl-D-erythritol 4-phosphate (MEP). This chain is 2-C-methyl-D-erythritol 4-phosphate cytidylyltransferase, found in Ralstonia nicotianae (strain ATCC BAA-1114 / GMI1000) (Ralstonia solanacearum).